We begin with the raw amino-acid sequence, 56 residues long: Small ribosomal subunit protein uS14 (56 aa).

Positions 21, 24, 39, and 42 each coordinate Zn(2+).

Belongs to the universal ribosomal protein uS14 family. In terms of assembly, component of the 40S small ribosomal subunit. It depends on Zn(2+) as a cofactor.

Its subcellular location is the cytoplasm. It is found in the cytosol. It localises to the rough endoplasmic reticulum. This chain is Small ribosomal subunit protein uS14 (RpS29), found in Drosophila melanogaster (Fruit fly).